The sequence spans 280 residues: MKKEKLRTENISFQYPGAATYALKDVSFSLYEGEWVSVIGQNGSGKSTLAKLLNGLFLPEAGTITVNDTMVLSEETVWDVRKQIGMVFQNPDNQFVGTTVQDDVVFGLENIGMPREQMVERLDQALRLVRMEDFLNDEPHSLSGGQKQRVAIAGVLALQPSILILDEATSMLDPQGRREVVETVRQLVNEKGITVLSITHDLEEAAQSDRVIILNKGEILEEGTPEQIFKSSHMLQEIGLDVPFSVKIAELLKRNEILLQNTHLTMESLVNELWRLHSKK.

In terms of domain architecture, ABC transporter spans L6–D241. G40–S47 contacts ATP.

It belongs to the ABC transporter superfamily. Energy-coupling factor EcfA family. In terms of assembly, forms a stable energy-coupling factor (ECF) transporter complex composed of 2 membrane-embedded substrate-binding proteins (S component), 2 ATP-binding proteins (A component) and 2 transmembrane proteins (T component).

It is found in the cell membrane. ATP-binding (A) component of a common energy-coupling factor (ECF) ABC-transporter complex. Unlike classic ABC transporters this ECF transporter provides the energy necessary to transport a number of different substrates. The protein is Energy-coupling factor transporter ATP-binding protein EcfA1 of Bacillus cereus (strain ATCC 10987 / NRS 248).